The sequence spans 335 residues: Fructose-1,6-bisphosphatase class 1 (335 aa).

Positions 92, 114, 116, and 117 each coordinate Mg(2+). Substrate-binding positions include 117–120, asparagine 210, tyrosine 242, and lysine 274; that span reads DGSS. Glutamate 280 lines the Mg(2+) pocket.

It belongs to the FBPase class 1 family. Homotetramer. Mg(2+) serves as cofactor.

The protein localises to the cytoplasm. The catalysed reaction is beta-D-fructose 1,6-bisphosphate + H2O = beta-D-fructose 6-phosphate + phosphate. Its pathway is carbohydrate biosynthesis; gluconeogenesis. The chain is Fructose-1,6-bisphosphatase class 1 from Lawsonia intracellularis (strain PHE/MN1-00).